Reading from the N-terminus, the 425-residue chain is Riboflavin biosynthesis protein RibBA (425 aa).

Residues 1 to 204 (MTRLDSVERA…IADLIEWRRK (204 aa)) form a DHBP synthase region. Residues 28–29 (RE), Asp-33, 141–145 (RPGHT), and Glu-165 each bind D-ribulose 5-phosphate. Glu-29 lines the Mg(2+) pocket. His-144 serves as a coordination point for Mg(2+). The segment at 205-425 (HEKHIERIAE…HLPGEFGGAL (221 aa)) is GTP cyclohydrolase II. Position 259–263 (259–263 (RVHSE)) interacts with GTP. Residues Cys-264, Cys-275, and Cys-277 each contribute to the Zn(2+) site. GTP-binding positions include Gln-280, 303–305 (EGR), and Thr-325. Asp-337 serves as the catalytic Proton acceptor; for GTP cyclohydrolase activity. Arg-339 functions as the Nucleophile; for GTP cyclohydrolase activity in the catalytic mechanism. GTP contacts are provided by Thr-360 and Lys-365.

It in the N-terminal section; belongs to the DHBP synthase family. The protein in the C-terminal section; belongs to the GTP cyclohydrolase II family. Requires Mg(2+) as cofactor. Mn(2+) serves as cofactor. Zn(2+) is required as a cofactor.

It carries out the reaction D-ribulose 5-phosphate = (2S)-2-hydroxy-3-oxobutyl phosphate + formate + H(+). It catalyses the reaction GTP + 4 H2O = 2,5-diamino-6-hydroxy-4-(5-phosphoribosylamino)-pyrimidine + formate + 2 phosphate + 3 H(+). It participates in cofactor biosynthesis; riboflavin biosynthesis; 2-hydroxy-3-oxobutyl phosphate from D-ribulose 5-phosphate: step 1/1. The protein operates within cofactor biosynthesis; riboflavin biosynthesis; 5-amino-6-(D-ribitylamino)uracil from GTP: step 1/4. In terms of biological role, catalyzes the conversion of D-ribulose 5-phosphate to formate and 3,4-dihydroxy-2-butanone 4-phosphate. Catalyzes the conversion of GTP to 2,5-diamino-6-ribosylamino-4(3H)-pyrimidinone 5'-phosphate (DARP), formate and pyrophosphate. The sequence is that of Riboflavin biosynthesis protein RibBA from Mycobacterium avium (strain 104).